The sequence spans 155 residues: Small ribosomal subunit protein uS7cz/uS7cy (155 aa).

The protein belongs to the universal ribosomal protein uS7 family. Part of the 30S ribosomal subunit.

It is found in the plastid. It localises to the chloroplast. One of the primary rRNA binding proteins, it binds directly to 16S rRNA where it nucleates assembly of the head domain of the 30S subunit. The sequence is that of Small ribosomal subunit protein uS7cz/uS7cy (rps7-A) from Jasminum nudiflorum (Winter jasmine).